Consider the following 450-residue polypeptide: tRNA modification GTPase MnmE (450 aa).

Residues Arg21, Glu80, and Lys119 each contribute to the (6S)-5-formyl-5,6,7,8-tetrahydrofolate site. The TrmE-type G domain maps to 213–373 (GIKVVIIGKP…LEEEIIKSVK (161 aa)). Asn223 lines the K(+) pocket. GTP-binding positions include 223–228 (NVGKST), 242–248 (TDIPGTT), and 267–270 (DTAG). Ser227 is a Mg(2+) binding site. Thr242, Ile244, and Thr247 together coordinate K(+). Thr248 is a binding site for Mg(2+). Lys450 lines the (6S)-5-formyl-5,6,7,8-tetrahydrofolate pocket.

It belongs to the TRAFAC class TrmE-Era-EngA-EngB-Septin-like GTPase superfamily. TrmE GTPase family. In terms of assembly, homodimer. Heterotetramer of two MnmE and two MnmG subunits. K(+) serves as cofactor.

The protein localises to the cytoplasm. Its function is as follows. Exhibits a very high intrinsic GTPase hydrolysis rate. Involved in the addition of a carboxymethylaminomethyl (cmnm) group at the wobble position (U34) of certain tRNAs, forming tRNA-cmnm(5)s(2)U34. The polypeptide is tRNA modification GTPase MnmE (Pseudothermotoga lettingae (strain ATCC BAA-301 / DSM 14385 / NBRC 107922 / TMO) (Thermotoga lettingae)).